Reading from the N-terminus, the 257-residue chain is ATP synthase subunit a (257 aa).

Residues 1 to 4 constitute a propeptide, removed in mature form; that stretch reads MFIT. The next 8 membrane-spanning stretches (helical) occupy residues 27–47, 58–78, 93–113, 122–142, 149–169, 189–209, 214–234, and 236–256; these read FSNF…LAII, IVPQ…LNLV, YFPF…LRLI, QLIF…ILGL, VFGL…LVLI, IIAG…FMGL, FIIG…EFGI, and FIQA…SLNL.

This sequence belongs to the ATPase A chain family. In terms of assembly, F-type ATPases have 2 components, CF(1) - the catalytic core - and CF(0) - the membrane proton channel. CF(1) has five subunits: alpha(3), beta(3), gamma(1), delta(1), epsilon(1). CF(0) has three main subunits: a, b and c.

The protein localises to the mitochondrion inner membrane. Its function is as follows. Mitochondrial membrane ATP synthase (F(1)F(0) ATP synthase or Complex V) produces ATP from ADP in the presence of a proton gradient across the membrane which is generated by electron transport complexes of the respiratory chain. F-type ATPases consist of two structural domains, F(1) - containing the extramembraneous catalytic core and F(0) - containing the membrane proton channel, linked together by a central stalk and a peripheral stalk. During catalysis, ATP synthesis in the catalytic domain of F(1) is coupled via a rotary mechanism of the central stalk subunits to proton translocation. Key component of the proton channel; it may play a direct role in the translocation of protons across the membrane. The chain is ATP synthase subunit a (atp6) from Schizosaccharomyces pombe (strain 972 / ATCC 24843) (Fission yeast).